The following is a 7763-amino-acid chain: Nonribosomal peptide synthetase agiA (7763 aa).

Positions 20–168 are condensation 1; that stretch reads APSVMQEEMI…DGWSARALLE (149 aa). Residues 469-866 are adenylation 1; it reads EQAASKWPSK…GRADGQIKLR (398 aa). Positions 995 to 1071 constitute a Carrier 1 domain; the sequence is LPESPAERLL…DVARAMSPSS (77 aa). The residue at position 1032 (Ser-1032) is an O-(pantetheine 4'-phosphoryl)serine. The condensation 2 stretch occupies residues 1104-1526; it reads IYPCTPQQEG…GLSDQKLITG (423 aa). The segment at 1562 to 1968 is adenylation 2; sequence FEMQADMTPQ…GRIDSQIKLR (407 aa). The 77-residue stretch at 2090–2166 folds into the Carrier 2 domain; sequence WEQGSIEDKI…SQAKCATSHT (77 aa). Ser-2127 carries the post-translational modification O-(pantetheine 4'-phosphoryl)serine. Residues 2212 to 2556 are epimerase (E); sequence DHFNQSVLLD…IMPLVFNYQG (345 aa). Positions 2676–3016 are condensation 3; the sequence is DIIPCTPMQR…PALVNTLLNF (341 aa). Positions 3136-3531 are adenylation 3; sequence WAAQVPEKVA…GRMDDQIKIR (396 aa). Residues 3667-3743 form the Carrier 3 domain; that stretch reads GPESPTEIML…ELATILNTSY (77 aa). Ser-3704 is subject to O-(pantetheine 4'-phosphoryl)serine. Residues 3789–4238 are condensation 4; that stretch reads VMPCTPFQEG…ISQSIDALVQ (450 aa). An adenylation 4 region spans residues 4321-4687; sequence VGSQQPIIPI…GRFDRQIKIR (367 aa). The region spanning 4806-4880 is the Carrier 4 domain; that stretch reads APTTEREKVI…DLARQLESTA (75 aa). The residue at position 4840 (Ser-4840) is an O-(pantetheine 4'-phosphoryl)serine. A condensation 5 region spans residues 4902–5339; it reads SFAQGRLWFL…ALLNDLSMHD (438 aa). Residues 5361–5765 are adenylation 5; sequence FRQEARSHPD…GRRDDQVKIR (405 aa). The segment at 5820–5975 is S-adenosyl-L-methionine-dependent N-methyltransferase; sequence DAWKNVFDTE…YLSEIVQKLV (156 aa). Residues 6306-6381 form the Carrier 5 domain; that stretch reads EYGSEMERIL…RLADRLLSKQ (76 aa). An O-(pantetheine 4'-phosphoryl)serine modification is found at Ser-6341. Positions 6378–6399 are disordered; the sequence is LSKQSDSNTEANTSTDGKTQHS. Residues 6379–6399 are compositionally biased toward polar residues; the sequence is SKQSDSNTEANTSTDGKTQHS. The interval 6424–6883 is condensation 6; sequence MPCTPFQEGV…TVGDAEEAAL (460 aa). Residues 6913–7327 are adenylation 6; the sequence is RQAMESPCKI…GRMDSQVKLR (415 aa). The Carrier 6 domain maps to 7446–7522; it reads PSPGTLEATL…SQAFRILCDV (77 aa). An O-(pantetheine 4'-phosphoryl)serine modification is found at Ser-7483. Positions 7542-7638 are thioesterase (TE); that stretch reads TMVLIHPFFG…TGKGSPFSTV (97 aa).

Belongs to the NRP synthetase family.

Its function is as follows. Nonribosomal peptide synthetase; part of the gene cluster that mediates the biosynthesis of the aspergillicins A and F, 2 cryptic cyclic hexa-depsipeptides. The hexamodular NRPS agiA catalyzes the condensation of the six amino acid residues including N-Me-L-O-Me-tyrosine, L-proline 1, L-proline 2, D-isoleucine, O-acetyl-threonine, and L-isoleucine. The starting condensation domain (C1) of agiA probably loads acetyl-CoA which is condensed on the N-terminus of threonine by the first module to yield O-acetyl-threonine. The second module then loads L-isoleucine. The epimerase (E) domain on module 2 is probably involved in the formation of the D-isoleucine moiety. Modules 3 and 4 further load 2 successive L-prolines. Module 5 is then involved in the condensation of O-Me-L-tyrosine produced by the O-methyltransferase agiB and the N-methyl transferase (NMeT) domain on module 5 probably catalyzes the N-methylation to yield the N-Me-L-O-Me-tyrosine moiety. The A domain of module 5 loads preferentially O-Me-L-tyrosine, but it can also accept L-phenylalanine, which leads to the production of aspergillicin G. Module 6 then loads the last residue, L-isoleucine. The C-terminal thiolesterase (TE) domain probably cyclizes the peptide using the hydroxy group from threonine to form the cyclic depsipeptide. The protein is Nonribosomal peptide synthetase agiA of Aspergillus flavus (strain ATCC 200026 / FGSC A1120 / IAM 13836 / NRRL 3357 / JCM 12722 / SRRC 167).